Reading from the N-terminus, the 841-residue chain is Translation initiation factor IF-2 (841 aa).

The segment at 94-255 (QRSPEEIEAE…RNAHGFQSPT (162 aa)) is disordered. Residues 96 to 135 (SPEEIEAERKREMDERRAVENAARQKAEEEAKRRAEEDAR) show a composition bias toward basic and acidic residues. Over residues 136 to 175 (NQPAAGQPASAPAQPVAAAEPVREAPAAAAPAPASAAPSA) the composition is skewed to low complexity. 2 stretches are compositionally biased toward basic and acidic residues: residues 176-217 (DARK…EKAP) and 225-234 (TTDEESDSFR). The span at 235–248 (RGGRGKGKLKKRNA) shows a compositional bias: basic residues. Positions 341–510 (SRAPVVTVMG…LLQAEVLELK (170 aa)) constitute a tr-type G domain. Residues 350-357 (GHVDHGKT) are G1. Residue 350–357 (GHVDHGKT) participates in GTP binding. Residues 375 to 379 (GITQH) are G2. The tract at residues 396–399 (DTPG) is G3. GTP-binding positions include 396–400 (DTPGH) and 450–453 (NKID). A G4 region spans residues 450-453 (NKID). The G5 stretch occupies residues 486 to 488 (SAK).

It belongs to the TRAFAC class translation factor GTPase superfamily. Classic translation factor GTPase family. IF-2 subfamily.

It localises to the cytoplasm. Its function is as follows. One of the essential components for the initiation of protein synthesis. Protects formylmethionyl-tRNA from spontaneous hydrolysis and promotes its binding to the 30S ribosomal subunits. Also involved in the hydrolysis of GTP during the formation of the 70S ribosomal complex. The sequence is that of Translation initiation factor IF-2 from Pseudomonas syringae pv. tomato (strain ATCC BAA-871 / DC3000).